Reading from the N-terminus, the 454-residue chain is Phosphoglucosamine mutase (454 aa).

Ser-102 acts as the Phosphoserine intermediate in catalysis. Ser-102, Asp-247, Asp-249, and Asp-251 together coordinate Mg(2+). Ser-102 bears the Phosphoserine mark.

This sequence belongs to the phosphohexose mutase family. Mg(2+) serves as cofactor. Activated by phosphorylation.

It carries out the reaction alpha-D-glucosamine 1-phosphate = D-glucosamine 6-phosphate. Its function is as follows. Catalyzes the conversion of glucosamine-6-phosphate to glucosamine-1-phosphate. The protein is Phosphoglucosamine mutase of Kineococcus radiotolerans (strain ATCC BAA-149 / DSM 14245 / SRS30216).